Consider the following 327-residue polypeptide: MKRLLPTLRADQTSESLISVINTIQIAAKEISFRLHQGALAGVLGSTLDENIQGETQKKLDVVANQLLKTLLLESPNVHAVASEEEDSIVESPNSGHYLVAFDPLDGSSNIDINGGVGTIFSILRKPEGEETSENMFLQPGKAQVAAGYVLYGPATMLVMTTGKAVRIYTLDQTVGEFLLTHEKAEIPKDTKEFAINMSNRRHWADPIRAYISDLLEGEEGPRGKNFNMRWNAAMVSDVHRVISRGGLFTYPWDARKPEKPFKLRLLYEAAPMAMLVEKAGGKATDGYSRLMEIVPEHIHQRVSVVMGSANEVDVCMDYHKQHPKPY.

Mg(2+)-binding residues include glutamate 84, aspartate 103, leucine 105, and aspartate 106. Substrate-binding positions include 106 to 109 (DGSS), asparagine 197, and lysine 263. Glutamate 269 is a Mg(2+) binding site.

Belongs to the FBPase class 1 family. In terms of assembly, homotetramer. It depends on Mg(2+) as a cofactor.

The protein resides in the cytoplasm. It carries out the reaction beta-D-fructose 1,6-bisphosphate + H2O = beta-D-fructose 6-phosphate + phosphate. It functions in the pathway carbohydrate biosynthesis; gluconeogenesis. The sequence is that of Fructose-1,6-bisphosphatase class 1 from Idiomarina loihiensis (strain ATCC BAA-735 / DSM 15497 / L2-TR).